The primary structure comprises 670 residues: Soluble lamin-associated protein of 75 kDa (670 aa).

Disordered regions lie at residues 273 to 301 and 314 to 670; these read PKRP…SSEM and STSE…AKLT. Serine 350 bears the Phosphoserine mark. Over residues 358 to 375 the composition is skewed to polar residues; it reads SQTSLTASINKLESTARP. Acidic residues predominate over residues 378 to 387; the sequence is SSEEFLEEEP. Residue serine 379 is modified to Phosphoserine. Residues 414-423 show a composition bias toward basic and acidic residues; that stretch reads EKQDGEKESE. The span at 442-453 shows a compositional bias: acidic residues; sequence TEEEDSTSEVLD. Serine 449 carries the post-translational modification Phosphoserine. Positions 460 to 470 are enriched in polar residues; sequence PFNSSEDSTNL. Composition is skewed to basic and acidic residues over residues 479-494 and 504-514; these read KPPE…RIPD and SDEKGHMEEKL. Position 515 is a phosphoserine (serine 515). Composition is skewed to polar residues over residues 558-569 and 579-591; these read ENLSPNTTSSLE and PQET…QSSL. Residues serine 615, serine 618, and serine 635 each carry the phosphoserine modification. Residues 651–670 are compositionally biased toward basic residues; it reads NLRRKAKGHKGPAKKKAKLT.

Belongs to the FAM169 family.

It localises to the nucleus envelope. Its subcellular location is the nucleus inner membrane. This chain is Soluble lamin-associated protein of 75 kDa (FAM169A), found in Homo sapiens (Human).